The primary structure comprises 121 residues: Glycine cleavage system H protein (121 aa).

The Lipoyl-binding domain maps to 16 to 98 (VATVGITAYA…ESGGWFAKIK (83 aa)). Lys-57 bears the N6-lipoyllysine mark.

Belongs to the GcvH family. The glycine cleavage system is composed of four proteins: P, T, L and H. Requires (R)-lipoate as cofactor.

Functionally, the glycine cleavage system catalyzes the degradation of glycine. The H protein shuttles the methylamine group of glycine from the P protein to the T protein. The sequence is that of Glycine cleavage system H protein from Caulobacter vibrioides (strain NA1000 / CB15N) (Caulobacter crescentus).